Consider the following 159-residue polypeptide: Crossover junction endodeoxyribonuclease RuvC (159 aa).

Active-site residues include aspartate 7, glutamate 67, and aspartate 139. Positions 7, 67, and 139 each coordinate Mg(2+).

The protein belongs to the RuvC family. As to quaternary structure, homodimer which binds Holliday junction (HJ) DNA. The HJ becomes 2-fold symmetrical on binding to RuvC with unstacked arms; it has a different conformation from HJ DNA in complex with RuvA. In the full resolvosome a probable DNA-RuvA(4)-RuvB(12)-RuvC(2) complex forms which resolves the HJ. Mg(2+) serves as cofactor.

It localises to the cytoplasm. It catalyses the reaction Endonucleolytic cleavage at a junction such as a reciprocal single-stranded crossover between two homologous DNA duplexes (Holliday junction).. The RuvA-RuvB-RuvC complex processes Holliday junction (HJ) DNA during genetic recombination and DNA repair. Endonuclease that resolves HJ intermediates. Cleaves cruciform DNA by making single-stranded nicks across the HJ at symmetrical positions within the homologous arms, yielding a 5'-phosphate and a 3'-hydroxyl group; requires a central core of homology in the junction. The consensus cleavage sequence is 5'-(A/T)TT(C/G)-3'. Cleavage occurs on the 3'-side of the TT dinucleotide at the point of strand exchange. HJ branch migration catalyzed by RuvA-RuvB allows RuvC to scan DNA until it finds its consensus sequence, where it cleaves and resolves the cruciform DNA. In Thermosynechococcus vestitus (strain NIES-2133 / IAM M-273 / BP-1), this protein is Crossover junction endodeoxyribonuclease RuvC.